We begin with the raw amino-acid sequence, 439 residues long: Histidinol dehydrogenase (439 aa).

Tyr129, Gln193, and Asn222 together coordinate NAD(+). Substrate-binding residues include Thr245, Gln267, and His270. Residues Gln267 and His270 each contribute to the Zn(2+) site. Catalysis depends on proton acceptor residues Glu336 and His337. Residues His337, Asp370, Glu424, and His429 each coordinate substrate. Asp370 serves as a coordination point for Zn(2+). Position 429 (His429) interacts with Zn(2+).

Belongs to the histidinol dehydrogenase family. The cofactor is Zn(2+).

It carries out the reaction L-histidinol + 2 NAD(+) + H2O = L-histidine + 2 NADH + 3 H(+). The protein operates within amino-acid biosynthesis; L-histidine biosynthesis; L-histidine from 5-phospho-alpha-D-ribose 1-diphosphate: step 9/9. Its function is as follows. Catalyzes the sequential NAD-dependent oxidations of L-histidinol to L-histidinaldehyde and then to L-histidine. The protein is Histidinol dehydrogenase of Cutibacterium acnes (strain DSM 16379 / KPA171202) (Propionibacterium acnes).